The following is a 409-amino-acid chain: 23S rRNA (uracil(747)-C(5))-methyltransferase (409 aa).

[4Fe-4S] cluster is bound by residues C61, C67, C70, and C137. The S-adenosyl-L-methionine site is built by Q251, Y277, E298, and D339. The active-site Nucleophile is C365.

It belongs to the class I-like SAM-binding methyltransferase superfamily. RNA M5U methyltransferase family.

The enzyme catalyses uridine(747) in 23S rRNA + S-adenosyl-L-methionine = 5-methyluridine(747) in 23S rRNA + S-adenosyl-L-homocysteine + H(+). Functionally, catalyzes the formation of 5-methyl-uridine at position equivalent to 747 (m5U747) in 23S rRNA. This is 23S rRNA (uracil(747)-C(5))-methyltransferase from Pyrococcus furiosus (strain ATCC 43587 / DSM 3638 / JCM 8422 / Vc1).